The sequence spans 643 residues: Extracellular metalloproteinase 4 (643 aa).

Residues 1 to 18 (MHGLMLAGLLALPLSVLG) form the signal peptide. Positions 19–254 (HPTESHSSGI…VHSVVDYVSA (236 aa)) are excised as a propeptide. The segment covering 47 to 57 (TKSDAVPKQDG) has biased composition (basic and acidic residues). The interval 47-73 (TKSDAVPKQDGESFTTSSTGNDNSSSG) is disordered. Low complexity predominate over residues 61–73 (TTSSTGNDNSSSG). Residues Asn-271 and Asn-420 are each glycosylated (N-linked (GlcNAc...) asparagine). His-437 contacts Zn(2+). The active site involves Glu-438. His-441 serves as a coordination point for Zn(2+). N-linked (GlcNAc...) asparagine glycosylation is found at Asn-603 and Asn-629.

It belongs to the peptidase M36 family. Zn(2+) serves as cofactor.

The protein resides in the secreted. Secreted metalloproteinase probably acting as a virulence factor. The protein is Extracellular metalloproteinase 4 (MEP4) of Trichophyton rubrum (Athlete's foot fungus).